The following is a 246-amino-acid chain: Carbonic anhydrase (246 aa).

A signal peptide spans 1–22 (MKTSLGKAALLALSMMPVTVFA). The region spanning 23–246 (SHWSYEGEGS…QPLNGRVVIE (224 aa)) is the Alpha-carbonic anhydrase domain. Cys46 and Cys201 are disulfide-bonded. The Proton acceptor role is filled by His84. The Zn(2+) site is built by His111, His113, and His130. Substrate is bound at residue 197 to 198 (TT).

It belongs to the alpha-carbonic anhydrase family. It depends on Zn(2+) as a cofactor.

Its subcellular location is the periplasm. The enzyme catalyses hydrogencarbonate + H(+) = CO2 + H2O. Functionally, reversible hydration of carbon dioxide. The sequence is that of Carbonic anhydrase (cah) from Klebsiella pneumoniae.